The sequence spans 199 residues: FMN-dependent NADH:quinone oxidoreductase 4 (199 aa).

Residues Ser-10, 95–98 (MYNL), and 139–142 (SRGG) contribute to the FMN site.

It belongs to the azoreductase type 1 family. Homodimer. Requires FMN as cofactor.

The catalysed reaction is 2 a quinone + NADH + H(+) = 2 a 1,4-benzosemiquinone + NAD(+). It carries out the reaction N,N-dimethyl-1,4-phenylenediamine + anthranilate + 2 NAD(+) = 2-(4-dimethylaminophenyl)diazenylbenzoate + 2 NADH + 2 H(+). Functionally, quinone reductase that provides resistance to thiol-specific stress caused by electrophilic quinones. In terms of biological role, also exhibits azoreductase activity. Catalyzes the reductive cleavage of the azo bond in aromatic azo compounds to the corresponding amines. The sequence is that of FMN-dependent NADH:quinone oxidoreductase 4 from Burkholderia lata (strain ATCC 17760 / DSM 23089 / LMG 22485 / NCIMB 9086 / R18194 / 383).